Consider the following 372-residue polypeptide: Glutamate 5-kinase (372 aa).

Position 14 (Lys-14) interacts with ATP. Substrate-binding residues include Ser-54, Asp-141, and Asn-153. 173–174 is an ATP binding site; it reads TD. One can recognise a PUA domain in the interval 280-358; it reads RGTLVLDAGA…DAIESILGYS (79 aa).

Belongs to the glutamate 5-kinase family.

The protein localises to the cytoplasm. The catalysed reaction is L-glutamate + ATP = L-glutamyl 5-phosphate + ADP. Its pathway is amino-acid biosynthesis; L-proline biosynthesis; L-glutamate 5-semialdehyde from L-glutamate: step 1/2. Its function is as follows. Catalyzes the transfer of a phosphate group to glutamate to form L-glutamate 5-phosphate. The protein is Glutamate 5-kinase of Pseudomonas putida (strain GB-1).